The primary structure comprises 274 residues: Large ribosomal subunit protein uL2 (274 aa).

Positions 224-256 (AMNPIDHPHGGGEGRTGEGRHAVDPWGNLTKGY) are disordered. Over residues 229–246 (DHPHGGGEGRTGEGRHAV) the composition is skewed to basic and acidic residues.

Belongs to the universal ribosomal protein uL2 family. Part of the 50S ribosomal subunit. Forms a bridge to the 30S subunit in the 70S ribosome.

Its function is as follows. One of the primary rRNA binding proteins. Required for association of the 30S and 50S subunits to form the 70S ribosome, for tRNA binding and peptide bond formation. It has been suggested to have peptidyltransferase activity; this is somewhat controversial. Makes several contacts with the 16S rRNA in the 70S ribosome. This is Large ribosomal subunit protein uL2 from Acidovorax ebreus (strain TPSY) (Diaphorobacter sp. (strain TPSY)).